Consider the following 695-residue polypeptide: DNA ligase (695 aa).

NAD(+) contacts are provided by residues 44-48, 93-94, and Glu-124; these read DAEYD and SL. Residue Lys-126 is the N6-AMP-lysine intermediate of the active site. NAD(+) is bound by residues Arg-147, Glu-187, Lys-304, and Lys-328. Residues Cys-422, Cys-425, Cys-440, and Cys-445 each contribute to the Zn(2+) site. A BRCT domain is found at 606 to 695; the sequence is TVQGPLAGKT…GIEVEAAARS (90 aa).

This sequence belongs to the NAD-dependent DNA ligase family. LigA subfamily. Mg(2+) serves as cofactor. Requires Mn(2+) as cofactor.

It carries out the reaction NAD(+) + (deoxyribonucleotide)n-3'-hydroxyl + 5'-phospho-(deoxyribonucleotide)m = (deoxyribonucleotide)n+m + AMP + beta-nicotinamide D-nucleotide.. DNA ligase that catalyzes the formation of phosphodiester linkages between 5'-phosphoryl and 3'-hydroxyl groups in double-stranded DNA using NAD as a coenzyme and as the energy source for the reaction. It is essential for DNA replication and repair of damaged DNA. The polypeptide is DNA ligase (Thermomicrobium roseum (strain ATCC 27502 / DSM 5159 / P-2)).